We begin with the raw amino-acid sequence, 94 residues long: DNA-directed RNA polymerase subunit omega (94 aa).

It belongs to the RNA polymerase subunit omega family. The RNAP catalytic core consists of 2 alpha, 1 beta, 1 beta' and 1 omega subunit. When a sigma factor is associated with the core the holoenzyme is formed, which can initiate transcription.

The catalysed reaction is RNA(n) + a ribonucleoside 5'-triphosphate = RNA(n+1) + diphosphate. In terms of biological role, promotes RNA polymerase assembly. Latches the N- and C-terminal regions of the beta' subunit thereby facilitating its interaction with the beta and alpha subunits. The protein is DNA-directed RNA polymerase subunit omega of Frankia casuarinae (strain DSM 45818 / CECT 9043 / HFP020203 / CcI3).